Reading from the N-terminus, the 316-residue chain is HTH-type transcriptional regulator cbl (316 aa).

The region spanning 1-59 (MNFQQLKIIREAARQDYNLTEVANMLFTSQSGVSRHIRELEDELGIEIFVRRGKRLLGM) is the HTH lysR-type domain. A DNA-binding region (H-T-H motif) is located at residues 19 to 38 (LTEVANMLFTSQSGVSRHIR).

Belongs to the LysR transcriptional regulatory family.

In terms of biological role, may be an accessory regulatory protein within the cys regulon. The polypeptide is HTH-type transcriptional regulator cbl (cbl) (Escherichia coli (strain K12)).